The chain runs to 80 residues: Conotoxin MaIr193 (80 aa).

Positions 1-22 are cleaved as a signal peptide; sequence MKLTCMMIVAVLFLTAWTLVTA. Residues 23–51 constitute a propeptide that is removed on maturation; it reads DGTRDGLKNRFPKARLEMKNSEAPRSRGR. Disulfide bonds link cysteine 52-cysteine 69, cysteine 59-cysteine 73, and cysteine 68-cysteine 77. A 4-hydroxyproline modification is found at proline 64.

The protein belongs to the conotoxin O1 superfamily. As to expression, expressed by the venom duct.

The protein localises to the secreted. The chain is Conotoxin MaIr193 from Conus marmoreus (Marble cone).